A 396-amino-acid chain; its full sequence is Polygalacturonase (396 aa).

The signal sequence occupies residues 1–22 (MDLKFKVHFALVLLFLAHFGES). N-linked (GlcNAc...) asparagine glycosylation is found at Asn-143, Asn-151, Asn-174, Asn-181, Asn-203, and Asn-208. PbH1 repeat units lie at residues 172–198 (CKNL…HVSR) and 199–220 (SSSV…SVGD). Catalysis depends on Asp-213, which acts as the Proton donor. Cys-215 and Cys-232 are oxidised to a cystine. Residue His-236 is part of the active site. PbH1 repeat units follow at residues 252–273 (VVGV…RIKT), 282–303 (VNDV…VIDQ), and 316–356 (PSQV…EVGD). Residues Asn-259 and Asn-294 are each glycosylated (N-linked (GlcNAc...) asparagine). Residues 364–396 (KEGPAKSSCENIKPSLKGKQNPPVCTASAASSS) are disordered. Residues Cys-372 and Cys-388 are joined by a disulfide bond.

The protein belongs to the glycosyl hydrolase 28 family. Pollen.

Its subcellular location is the secreted. It localises to the cell wall. The catalysed reaction is (1,4-alpha-D-galacturonosyl)n+m + H2O = (1,4-alpha-D-galacturonosyl)n + (1,4-alpha-D-galacturonosyl)m.. In terms of biological role, may function in depolymerizing pectin during pollen development, germination, and tube growth. The sequence is that of Polygalacturonase (PG1) from Nicotiana tabacum (Common tobacco).